Consider the following 419-residue polypeptide: UPF0329 protein ECU07_1890/ECU10_0010 (419 aa).

The span at 136–165 (RQRKREEETERSVKELVGDEEKAKSKEEKA) shows a compositional bias: basic and acidic residues. Positions 136–222 (RQRKREEETE…KGGKKKSKGG (87 aa)) are disordered. The segment covering 213 to 222 (KGGKKKSKGG) has biased composition (basic residues).

Belongs to the UPF0329 family.

The protein is UPF0329 protein ECU07_1890/ECU10_0010 of Encephalitozoon cuniculi (strain GB-M1) (Microsporidian parasite).